We begin with the raw amino-acid sequence, 168 residues long: 3-dehydroquinate dehydratase (168 aa).

Tyrosine 22 serves as the catalytic Proton acceptor. Substrate contacts are provided by asparagine 76, histidine 82, and aspartate 89. The active-site Proton donor is histidine 102. Substrate contacts are provided by residues 103 to 104 (LT) and arginine 113.

It belongs to the type-II 3-dehydroquinase family. Homododecamer.

It catalyses the reaction 3-dehydroquinate = 3-dehydroshikimate + H2O. Its pathway is metabolic intermediate biosynthesis; chorismate biosynthesis; chorismate from D-erythrose 4-phosphate and phosphoenolpyruvate: step 3/7. Catalyzes a trans-dehydration via an enolate intermediate. This chain is 3-dehydroquinate dehydratase, found in Helicobacter acinonychis (strain Sheeba).